The following is a 347-amino-acid chain: Ion-translocating oxidoreductase complex subunit D (347 aa).

4 helical membrane-spanning segments follow: residues Ile15–Gly35, Ile36–Ile56, Ile84–Ala104, and Asn114–Met134. Thr182 bears the FMN phosphoryl threonine mark. The next 5 helical transmembrane spans lie at Cys217–Trp237, Ile239–Lys259, Leu261–Ile281, Ala289–Ile309, and Tyr315–Tyr335.

Belongs to the NqrB/RnfD family. As to quaternary structure, the complex is composed of six subunits: RnfA, RnfB, RnfC, RnfD, RnfE and RnfG. FMN is required as a cofactor.

The protein resides in the cell inner membrane. Part of a membrane-bound complex that couples electron transfer with translocation of ions across the membrane. The polypeptide is Ion-translocating oxidoreductase complex subunit D (Buchnera aphidicola subsp. Acyrthosiphon pisum (strain 5A)).